The following is a 921-amino-acid chain: Glutamate receptor 3.7 (921 aa).

An N-terminal signal peptide occupies residues 1–25; that stretch reads MGLGIDPSVAITALIVVILVVPMDC. The Extracellular portion of the chain corresponds to 26–580; it reads QRPQLVNIGA…WIFLRPFTSR (555 aa). N-linked (GlcNAc...) asparagine glycosylation is found at asparagine 214, asparagine 300, asparagine 330, asparagine 369, asparagine 396, asparagine 478, and asparagine 568. The chain crosses the membrane as a helical span at residues 581–601; sequence LWCVVLVSFLVIAVVIWILEH. At 602-608 the chain is on the cytoplasmic side; it reads RINEDFR. The helical transmembrane segment at 609-629 threads the bilayer; that stretch reads GPPRRQLSTMLLFSFSTLFKR. The Cytoplasmic segment spans residues 630–640; it reads NQEDTISNLAR. A helical transmembrane segment spans residues 641-661; the sequence is LVMIVWLFLLMVLTASYTANL. Topologically, residues 662–822 are extracellular; sequence TSILTVQQLP…PEPNQLHLKS (161 aa). Residues 823–843 form a helical membrane-spanning segment; it reads FKGLYLVCIAITVSAFLVFVL. Topologically, residues 844–921 are cytoplasmic; it reads RMIRQFVRYR…VQADTEVPRN (78 aa). The segment at 896 to 921 is disordered; it reads FRRSDDSNNNPSHVGEVQADTEVPRN.

The protein belongs to the glutamate-gated ion channel (TC 1.A.10.1) family. May form heteromers. As to expression, expressed predominantly in leaves and siliques. Also detected in roots.

It localises to the membrane. Its function is as follows. Glutamate-gated receptor that probably acts as a non-selective cation channel. May be involved in light-signal transduction and calcium homeostasis via the regulation of calcium influx into cells. The chain is Glutamate receptor 3.7 (GLR3.7) from Arabidopsis thaliana (Mouse-ear cress).